The chain runs to 24 residues: Defensin D5 (24 aa).

The protein belongs to the DEFL family. Group IV subfamily. As to expression, distributed in the epidermal cell layer of leaves and in the subepidermal layer region of stems. Not in roots.

The protein localises to the secreted. It localises to the cell wall. Its function is as follows. Antimicrobial peptide. Active against Fusarium spp., Gram-positive and Gram-negative bacterial pathogens. In Spinacia oleracea (Spinach), this protein is Defensin D5.